We begin with the raw amino-acid sequence, 426 residues long: Zinc finger CCCH domain-containing protein 13 (426 aa).

A C3H1-type zinc finger spans residues Ala-10 to Gly-36. Disordered regions lie at residues Gly-34–Gln-155, Asn-253–Ser-317, and Asn-390–Glu-426. 3 stretches are compositionally biased toward basic and acidic residues: residues Arg-54–Phe-70, Pro-78–Ser-101, and Arg-108–Asp-120. Over residues Asn-124–Asp-133 the composition is skewed to low complexity. A compositionally biased stretch (basic and acidic residues) spans Asn-135–Gln-155. Residues Ser-144–Ser-245 adopt a coiled-coil conformation. Positions Glu-255–Ala-272 are enriched in polar residues. The segment covering Glu-284–Ser-317 has biased composition (basic and acidic residues). The span at Tyr-416 to Glu-426 shows a compositional bias: acidic residues.

In Oryza sativa subsp. japonica (Rice), this protein is Zinc finger CCCH domain-containing protein 13.